We begin with the raw amino-acid sequence, 156 residues long: Cyclic pyranopterin monophosphate synthase (156 aa).

Substrate-binding positions include 73-75 (LCH) and 110-111 (ME). Residue D125 is part of the active site.

Belongs to the MoaC family. As to quaternary structure, homohexamer; trimer of dimers.

It catalyses the reaction (8S)-3',8-cyclo-7,8-dihydroguanosine 5'-triphosphate = cyclic pyranopterin phosphate + diphosphate. It participates in cofactor biosynthesis; molybdopterin biosynthesis. Catalyzes the conversion of (8S)-3',8-cyclo-7,8-dihydroguanosine 5'-triphosphate to cyclic pyranopterin monophosphate (cPMP). The protein is Cyclic pyranopterin monophosphate synthase of Pseudomonas entomophila (strain L48).